The sequence spans 512 residues: GMP synthase [glutamine-hydrolyzing] (512 aa).

The 191-residue stretch at threonine 7–glycine 197 folds into the Glutamine amidotransferase type-1 domain. Catalysis depends on cysteine 84, which acts as the Nucleophile. Residues histidine 171 and glutamate 173 contribute to the active site. In terms of domain architecture, GMPS ATP-PPase spans tryptophan 198–arginine 387. Serine 225–serine 231 serves as a coordination point for ATP.

As to quaternary structure, homodimer.

It catalyses the reaction XMP + L-glutamine + ATP + H2O = GMP + L-glutamate + AMP + diphosphate + 2 H(+). Its pathway is purine metabolism; GMP biosynthesis; GMP from XMP (L-Gln route): step 1/1. Functionally, catalyzes the synthesis of GMP from XMP. This chain is GMP synthase [glutamine-hydrolyzing], found in Bacillus mycoides (strain KBAB4) (Bacillus weihenstephanensis).